The following is a 331-amino-acid chain: MNITILGAGAWGTALAMSLADRHSVMLWGRDAAVMQEAEQRRENTVYLPGFRLPDSLSLSSDFSAAIAHVGTDGLLLVATSLAGLRPLAMQLQPYAIPNIVWLCKGFEADTHLLPHQIVREVLGNDIPAGALSGPSFAQEVAQGLPCALAIASDNAALRELVVSAVHGPSMRIYSTDDVIGVEVGGAVKNILAIATGIIDGLKLGMNARAALITRGLVEITRFGVALGGRTETFMGLAGMGDLILTCTGDLSRNRKVGLGLAQGKKLEQIVTELGHVAEGVRCAQAVRSLAAERGIDMPITNAVAAVLFDGDLPREMVGRLLARDARNEMA.

NADPH is bound by residues tryptophan 11, arginine 30, and lysine 105. Sn-glycerol 3-phosphate is bound by residues lysine 105, glycine 134, and serine 136. An NADPH-binding site is contributed by alanine 138. 5 residues coordinate sn-glycerol 3-phosphate: lysine 189, aspartate 242, serine 252, arginine 253, and asparagine 254. Catalysis depends on lysine 189, which acts as the Proton acceptor. Position 253 (arginine 253) interacts with NADPH. Positions 277 and 279 each coordinate NADPH.

The protein belongs to the NAD-dependent glycerol-3-phosphate dehydrogenase family.

The protein localises to the cytoplasm. It carries out the reaction sn-glycerol 3-phosphate + NAD(+) = dihydroxyacetone phosphate + NADH + H(+). The catalysed reaction is sn-glycerol 3-phosphate + NADP(+) = dihydroxyacetone phosphate + NADPH + H(+). It functions in the pathway membrane lipid metabolism; glycerophospholipid metabolism. Its function is as follows. Catalyzes the reduction of the glycolytic intermediate dihydroxyacetone phosphate (DHAP) to sn-glycerol 3-phosphate (G3P), the key precursor for phospholipid synthesis. In Herminiimonas arsenicoxydans, this protein is Glycerol-3-phosphate dehydrogenase [NAD(P)+].